The sequence spans 664 residues: E3 ubiquitin-protein ligase CHFR (664 aa).

The FHA domain occupies 38–89; sequence WTIGRRRGCDLSFPSNKLVSGDHCKLTVDEISGEVTLEDTSTNGTVINKLQV. 2 disordered regions span residues 170 to 220 and 245 to 264; these read LEEP…GRSS and ESKD…GDGE. The span at 174–202 shows a compositional bias: polar residues; sequence QPSTSTSDLLPTASTSSTEPELTSAGQKH. A compositionally biased stretch (low complexity) spans 203-215; sequence SSSSGPGNTSISP. Residues 245–263 show a composition bias toward basic and acidic residues; that stretch reads ESKDHEELEPAKKKMKGDG. The segment at 303–342 adopts an RING-type zinc-finger fold; that stretch reads CIICQDLLHDCVSLQPCMHTFCAACYSGWMERSSLCPTCR. The residue at position 385 (T385) is a Phosphothreonine. Positions 389–413 are disordered; that stretch reads LQPKVRRSFSDEEGSSEDLLELSDV. The segment covering 399 to 413 has biased composition (acidic residues); it reads DEEGSSEDLLELSDV. A PBZ-type zinc finger spans residues 633-655; the sequence is PDCYWGRNCRTQVKAHHAMKFNH.

This sequence belongs to the CHFR family. As to quaternary structure, interacts with HDAC1 and HDAC2. Interacts with PML (with sumoylated form of PML). Post-translationally, poly-ADP-ribosylated. In addition to binding non covalently poly(ADP-ribose) via its PBZ-type zinc finger, the protein is also covalently poly-ADP-ribosylated by PARP1. In terms of processing, autoubiquitinated; may regulate its cellular level. Phosphorylated by PKB. Phosphorylation may affect its E3 ligase activity.

The protein localises to the nucleus. It is found in the PML body. The catalysed reaction is S-ubiquitinyl-[E2 ubiquitin-conjugating enzyme]-L-cysteine + [acceptor protein]-L-lysine = [E2 ubiquitin-conjugating enzyme]-L-cysteine + N(6)-ubiquitinyl-[acceptor protein]-L-lysine.. Its pathway is protein modification; protein ubiquitination. Functionally, E3 ubiquitin-protein ligase that functions in the antephase checkpoint by actively delaying passage into mitosis in response to microtubule poisons. Acts in early prophase before chromosome condensation, when the centrosome move apart from each other along the periphery of the nucleus. Probably involved in signaling the presence of mitotic stress caused by microtubule poisons by mediating the 'Lys-48'-linked ubiquitination of target proteins, leading to their degradation by the proteasome. Promotes the ubiquitination and subsequent degradation of AURKA and PLK1. Probably acts as a tumor suppressor, possibly by mediating the polyubiquitination of HDAC1, leading to its degradation. May also promote the formation of 'Lys-63'-linked polyubiquitin chains and functions with the specific ubiquitin-conjugating UBC13-MMS2 (UBE2N-UBE2V2) heterodimer. Substrates that are polyubiquitinated at 'Lys-63' are usually not targeted for degradation, but are rather involved in signaling cellular stress. The sequence is that of E3 ubiquitin-protein ligase CHFR (Chfr) from Mus musculus (Mouse).